A 492-amino-acid polypeptide reads, in one-letter code: Ketol-acid reductoisomerase (NADP(+)) (492 aa).

The region spanning 17 to 208 is the KARI N-terminal Rossmann domain; the sequence is LGQCRLMKKN…GSNKAGVLES (192 aa). NADP(+) contacts are provided by residues 45–48, Arg-68, Ser-76, and Ser-78; that span reads CGSQ. His-132 is an active-site residue. Gly-158 lines the NADP(+) pocket. 2 KARI C-terminal knotted domains span residues 209–344 and 345–487; these read SFVA…KAPV and YCET…MKDM. Residues Asp-217, Glu-221, Glu-389, and Glu-393 each coordinate Mg(2+). Ser-414 serves as a coordination point for substrate.

This sequence belongs to the ketol-acid reductoisomerase family. The cofactor is Mg(2+).

The enzyme catalyses (2R)-2,3-dihydroxy-3-methylbutanoate + NADP(+) = (2S)-2-acetolactate + NADPH + H(+). The catalysed reaction is (2R,3R)-2,3-dihydroxy-3-methylpentanoate + NADP(+) = (S)-2-ethyl-2-hydroxy-3-oxobutanoate + NADPH + H(+). It functions in the pathway amino-acid biosynthesis; L-isoleucine biosynthesis; L-isoleucine from 2-oxobutanoate: step 2/4. It participates in amino-acid biosynthesis; L-valine biosynthesis; L-valine from pyruvate: step 2/4. In terms of biological role, involved in the biosynthesis of branched-chain amino acids (BCAA). Catalyzes an alkyl-migration followed by a ketol-acid reduction of (S)-2-acetolactate (S2AL) to yield (R)-2,3-dihydroxy-isovalerate. In the isomerase reaction, S2AL is rearranged via a Mg-dependent methyl migration to produce 3-hydroxy-3-methyl-2-ketobutyrate (HMKB). In the reductase reaction, this 2-ketoacid undergoes a metal-dependent reduction by NADPH to yield (R)-2,3-dihydroxy-isovalerate. The polypeptide is Ketol-acid reductoisomerase (NADP(+)) (Blochmanniella floridana).